The primary structure comprises 135 residues: Large ribosomal subunit protein uL22c (135 aa).

It belongs to the universal ribosomal protein uL22 family. In terms of assembly, part of the 50S ribosomal subunit.

Its subcellular location is the plastid. This protein binds specifically to 23S rRNA. Functionally, the globular domain of the protein is located near the polypeptide exit tunnel on the outside of the subunit, while an extended beta-hairpin is found that lines the wall of the exit tunnel in the center of the 70S ribosome. This chain is Large ribosomal subunit protein uL22c (rpl22), found in Cuscuta reflexa (Southern Asian dodder).